Reading from the N-terminus, the 1404-residue chain is DNA-directed RNA polymerase subunit beta' (1404 aa).

Cysteine 70, cysteine 72, cysteine 85, and cysteine 88 together coordinate Zn(2+). 3 residues coordinate Mg(2+): aspartate 460, aspartate 462, and aspartate 464. Zn(2+) contacts are provided by cysteine 814, cysteine 888, cysteine 895, and cysteine 898.

It belongs to the RNA polymerase beta' chain family. In terms of assembly, the RNAP catalytic core consists of 2 alpha, 1 beta, 1 beta' and 1 omega subunit. When a sigma factor is associated with the core the holoenzyme is formed, which can initiate transcription. Requires Mg(2+) as cofactor. Zn(2+) is required as a cofactor.

It catalyses the reaction RNA(n) + a ribonucleoside 5'-triphosphate = RNA(n+1) + diphosphate. Its function is as follows. DNA-dependent RNA polymerase catalyzes the transcription of DNA into RNA using the four ribonucleoside triphosphates as substrates. The polypeptide is DNA-directed RNA polymerase subunit beta' (Buchnera aphidicola subsp. Baizongia pistaciae (strain Bp)).